Reading from the N-terminus, the 257-residue chain is Imidazole glycerol phosphate synthase subunit HisF (257 aa).

Residues Asp-12 and Asp-131 contribute to the active site.

Belongs to the HisA/HisF family. Heterodimer of HisH and HisF.

It is found in the cytoplasm. The enzyme catalyses 5-[(5-phospho-1-deoxy-D-ribulos-1-ylimino)methylamino]-1-(5-phospho-beta-D-ribosyl)imidazole-4-carboxamide + L-glutamine = D-erythro-1-(imidazol-4-yl)glycerol 3-phosphate + 5-amino-1-(5-phospho-beta-D-ribosyl)imidazole-4-carboxamide + L-glutamate + H(+). It participates in amino-acid biosynthesis; L-histidine biosynthesis; L-histidine from 5-phospho-alpha-D-ribose 1-diphosphate: step 5/9. In terms of biological role, IGPS catalyzes the conversion of PRFAR and glutamine to IGP, AICAR and glutamate. The HisF subunit catalyzes the cyclization activity that produces IGP and AICAR from PRFAR using the ammonia provided by the HisH subunit. The sequence is that of Imidazole glycerol phosphate synthase subunit HisF from Paraburkholderia phymatum (strain DSM 17167 / CIP 108236 / LMG 21445 / STM815) (Burkholderia phymatum).